Here is a 750-residue protein sequence, read N- to C-terminus: EF-hand domain-containing family member C2 (750 aa).

3 consecutive DM10 domains span residues 75–182 (DKQV…KKIG), 226–368 (DGKV…RTKY), and 430–537 (ISNI…ENNT). One can recognise an EF-hand domain in the interval 557–592 (SKSREITQVFAAADYNHTKVVPYNTFRDILMSITMG).

Microtubule inner protein component of sperm flagellar doublet microtubules.

The protein resides in the cytoplasm. It is found in the cytoskeleton. It localises to the cilium axoneme. Its subcellular location is the flagellum axoneme. Functionally, microtubule inner protein (MIP) part of the dynein-decorated doublet microtubules (DMTs) in cilia axoneme, which is required for motile cilia beating. The sequence is that of EF-hand domain-containing family member C2 (Efhc2) from Mus musculus (Mouse).